Consider the following 373-residue polypeptide: 5-amino-6-(5-phospho-D-ribitylamino)uracil phosphatase, chloroplastic (373 aa).

It belongs to the HAD-like hydrolase superfamily. DOG/GPP family. Homodimer. It depends on Mg(2+) as a cofactor.

Its subcellular location is the plastid. The protein resides in the chloroplast. The enzyme catalyses 5-amino-6-(5-phospho-D-ribitylamino)uracil + H2O = 5-amino-6-(D-ribitylamino)uracil + phosphate. Catalyzes the dephosphorylation of 5-amino-6-(5-phospho-D-ribitylamino)uracil, also known as ARPP, but has no activity toward flavin mononucleotide (FMN). This is 5-amino-6-(5-phospho-D-ribitylamino)uracil phosphatase, chloroplastic from Arabidopsis thaliana (Mouse-ear cress).